The sequence spans 310 residues: Acetylglutamate kinase (310 aa).

Substrate contacts are provided by residues 76 to 77 (GG), Arg98, and Asn203.

It belongs to the acetylglutamate kinase family. ArgB subfamily.

It is found in the cytoplasm. It carries out the reaction N-acetyl-L-glutamate + ATP = N-acetyl-L-glutamyl 5-phosphate + ADP. Its pathway is amino-acid biosynthesis; L-arginine biosynthesis; N(2)-acetyl-L-ornithine from L-glutamate: step 2/4. In terms of biological role, catalyzes the ATP-dependent phosphorylation of N-acetyl-L-glutamate. This is Acetylglutamate kinase from Cutibacterium acnes (strain DSM 16379 / KPA171202) (Propionibacterium acnes).